A 292-amino-acid polypeptide reads, in one-letter code: Homoserine kinase (292 aa).

ATP is bound at residue 81 to 91 (RPRSGLGSSGA).

Belongs to the GHMP kinase family. Homoserine kinase subfamily.

It localises to the cytoplasm. The catalysed reaction is L-homoserine + ATP = O-phospho-L-homoserine + ADP + H(+). The protein operates within amino-acid biosynthesis; L-threonine biosynthesis; L-threonine from L-aspartate: step 4/5. In terms of biological role, catalyzes the ATP-dependent phosphorylation of L-homoserine to L-homoserine phosphate. This Thermococcus gammatolerans (strain DSM 15229 / JCM 11827 / EJ3) protein is Homoserine kinase.